Reading from the N-terminus, the 351-residue chain is Rhodopsin (351 aa).

Over 1 to 36 the chain is Extracellular; sequence MNGTEGQDFYVPMSNKTGVVRSPFEYPQYYLAEPWK. Asn-2 and Asn-15 each carry an N-linked (GlcNAc...) asparagine glycan. Residues 37 to 61 form a helical membrane-spanning segment; it reads FSALAAYMFMLILLGFPVNFLTLYV. Topologically, residues 62 to 73 are cytoplasmic; sequence TIQHKKLRTPLN. The helical transmembrane segment at 74-96 threads the bilayer; the sequence is YILLNLVVADLFMVFGGFTTTMY. At 97–110 the chain is on the extracellular side; that stretch reads TSMNGYFVFGVTGC. Cys-110 and Cys-187 are oxidised to a cystine. The helical transmembrane segment at 111–133 threads the bilayer; sequence YIEGFFATLGGEIALWSLVVLAV. The 'Ionic lock' involved in activated form stabilization motif lies at 134–136; the sequence is ERY. Over 134–152 the chain is Cytoplasmic; that stretch reads ERYVVVCKPMSNFRFGENH. A helical membrane pass occupies residues 153-173; it reads AIMGVAFSWIMAMACAAPPLF. Topologically, residues 174–202 are extracellular; the sequence is GWSRYIPEGMQCSCGIDYYTLKPEINNES. Residues 203–224 traverse the membrane as a helical segment; that stretch reads FVIYMFVVHFMIPLAVIFFCYG. Residues 225–252 lie on the Cytoplasmic side of the membrane; sequence NLVCTVKEAAAQQQESATTQKAEKEVTR. The helical transmembrane segment at 253 to 274 threads the bilayer; that stretch reads MVIIMVIAFLICWVPYASVAFY. The Extracellular segment spans residues 275 to 286; sequence IFTNQGSDFGPI. The chain crosses the membrane as a helical span at residues 287 to 308; it reads FMTIPAFFAKSSAIYNPVIYIV. Lys-296 carries the post-translational modification N6-(retinylidene)lysine. Residues 309 to 351 lie on the Cytoplasmic side of the membrane; the sequence is MNKQFRNCMITTLCCGKNPLGDEDTSAGKTETSSVSTSQVSPA. Residues Cys-322 and Cys-323 are each lipidated (S-palmitoyl cysteine). A disordered region spans residues 331 to 351; that stretch reads EDTSAGKTETSSVSTSQVSPA. Residues 340-351 are compositionally biased toward low complexity; it reads TSSVSTSQVSPA. Position 341 is a phosphoserine; by RK and GRK7 (Ser-341).

Belongs to the G-protein coupled receptor 1 family. Opsin subfamily. Post-translationally, contains one covalently linked retinal chromophore. Upon light absorption, the covalently bound 11-cis-retinal is converted to all-trans-retinal. After hydrolysis of the Schiff base and release of the covalently bound all-trans-retinal, active rhodopsin is regenerated by binding of a fresh molecule of 11-cis-retinal.

The protein resides in the membrane. It is found in the cell projection. Its subcellular location is the cilium. The protein localises to the photoreceptor outer segment. Photoreceptor required for image-forming vision at low light intensity. Required for photoreceptor cell viability after birth. Light-induced isomerization of 11-cis to all-trans retinal triggers a conformational change that activates signaling via G-proteins. Subsequent receptor phosphorylation mediates displacement of the bound G-protein alpha subunit by arrestin and terminates signaling. The chain is Rhodopsin (RHO) from Gallus gallus (Chicken).